Here is a 432-residue protein sequence, read N- to C-terminus: 3-chlorobenzoate-3,4-dioxygenase oxygenase subunit (432 aa).

Residues 27–133 (WIPALKSTEL…VKEMAGVVWV (107 aa)) form the Rieske domain. Residues C69, H71, C88, and H91 each coordinate [2Fe-2S] cluster. Fe cation contacts are provided by H180 and H185.

Belongs to the bacterial ring-hydroxylating dioxygenase alpha subunit family. As to quaternary structure, this dioxygenase system consists of two proteins: an oxygenase and an oxygenase reductase. The cofactor is [2Fe-2S] cluster. Fe cation is required as a cofactor.

The protein is 3-chlorobenzoate-3,4-dioxygenase oxygenase subunit (cbaA) of Comamonas testosteroni (Pseudomonas testosteroni).